Consider the following 300-residue polypeptide: Elongator complex protein 5 (300 aa).

S252 is modified (phosphoserine). Residues 279-300 (IFYEPDAFDDVDPEDPDDDLDI) are disordered. Residues 284 to 300 (DAFDDVDPEDPDDDLDI) are compositionally biased toward acidic residues.

Belongs to the ELP5 family. Component of the elongator complex which consists of ELP1, ELP2, ELP3, ELP4, ELP5 and ELP6; in the complex, is required for optimal binding of ELP3 to ELP4. Tyrosine-phosphorylated. Widely expressed with highest levels in testis. Expressed throughout the cerebellum.

It is found in the nucleus. Its subcellular location is the cytoplasm. It functions in the pathway tRNA modification; 5-methoxycarbonylmethyl-2-thiouridine-tRNA biosynthesis. Component of the elongator complex which is required for multiple tRNA modifications, including mcm5U (5-methoxycarbonylmethyl uridine), mcm5s2U (5-methoxycarbonylmethyl-2-thiouridine), and ncm5U (5-carbamoylmethyl uridine). The elongator complex catalyzes the formation of carboxymethyluridine in the wobble base at position 34 in tRNAs. Involved in cell migration. The sequence is that of Elongator complex protein 5 (Elp5) from Mus musculus (Mouse).